We begin with the raw amino-acid sequence, 428 residues long: Oxysterol-binding protein 9 (428 aa).

A compositionally biased stretch (polar residues) spans 1–11 (MTEVQSITTSG). Disordered regions lie at residues 1–32 (MTEV…STTN) and 396–428 (ALIE…KNQK). Positions 18–32 (SPSSSSSSISSSTTN) are enriched in low complexity. A coiled-coil region spans residues 389–422 (EEAKKYKALIEDNQRKQKKEKDEKLKKDEKLKKE).

Belongs to the OSBP family.

In Dictyostelium discoideum (Social amoeba), this protein is Oxysterol-binding protein 9 (osbI).